Reading from the N-terminus, the 350-residue chain is UDP-glucose 4-epimerase (350 aa).

Residues 13–15, 34–38, 67–68, Phe-89, and Lys-93 each bind NAD(+); these read GYI, DNLCN, and DI. 133-135 contacts substrate; sequence SAT. Tyr-158 (proton acceptor) is an active-site residue. Lys-162 and Tyr-186 together coordinate NAD(+). Residues 186–188, 207–209, 225–227, Arg-240, and 303–306 each bind substrate; these read YFN, NNL, SVY, and RSGD.

Belongs to the NAD(P)-dependent epimerase/dehydratase family. As to quaternary structure, homodimer. NAD(+) is required as a cofactor.

It carries out the reaction UDP-alpha-D-glucose = UDP-alpha-D-galactose. The enzyme catalyses UDP-N-acetyl-alpha-D-glucosamine = UDP-N-acetyl-alpha-D-galactosamine. Its pathway is carbohydrate metabolism; galactose metabolism. Its function is as follows. Catalyzes two distinct but analogous reactions: the reversible epimerization of UDP-glucose to UDP-galactose and the reversible epimerization of UDP-N-acetylglucosamine to UDP-N-acetylgalactosamine. The reaction with UDP-Gal plays a critical role in the Leloir pathway of galactose catabolism in which galactose is converted to the glycolytic intermediate glucose 6-phosphate. It contributes to the catabolism of dietary galactose and enables the endogenous biosynthesis of both UDP-Gal and UDP-GalNAc when exogenous sources are limited. Both UDP-sugar interconversions are important in the synthesis of glycoproteins and glycolipids. In Drosophila melanogaster (Fruit fly), this protein is UDP-glucose 4-epimerase (Gale).